Here is a 521-residue protein sequence, read N- to C-terminus: Histidine--tRNA ligase (521 aa).

Residues 137-139, R164, Q180, D184, R338, and 342-343 each bind L-histidine; these read DLT and YY.

Belongs to the class-II aminoacyl-tRNA synthetase family.

The enzyme catalyses tRNA(His) + L-histidine + ATP = L-histidyl-tRNA(His) + AMP + diphosphate + H(+). Involved in protein synthesis. Catalyzes the specific attachment of an amino acid to its cognate tRNA in a 2 step reaction: the amino acid (AA) is first activated by ATP to form AA-AMP and then transferred to the acceptor end of the tRNA. Required for germ cell development. In Caenorhabditis elegans, this protein is Histidine--tRNA ligase.